We begin with the raw amino-acid sequence, 121 residues long: Estrogen receptor (121 aa).

The NR LBD domain occupies 1-121; the sequence is LFAPNLLLDR…IRHMSNKGME (121 aa). The S-palmitoyl cysteine moiety is linked to residue cysteine 45.

Belongs to the nuclear hormone receptor family. NR3 subfamily. Binds DNA as a homodimer. Can form a heterodimer with ESR2. Interacts with coactivator NCOA5. Interacts with NCOA7; the interaction is ligand-inducible. Interacts with AKAP13, CUEDC2, HEXIM1, KDM5A, MAP1S, PELP1, SMARD1, and UBE1C. Interacts with MUC1; the interaction is stimulated by 7 beta-estradiol (E2) and enhances ERS1-mediated transcription. Interacts with DNTTIP2, and UIMC1. Interacts with KMT2D/MLL2. Interacts with ATAD2; the interaction is enhanced by estradiol. Interacts with KIF18A and LDB1. Interacts with RLIM (via its C-terminus). Interacts with MACROD1. Interacts with SH2D4A and PLCG. Interacts with SH2D4A; the interaction blocks binding to PLCG and inhibits estrogen-induced cell proliferation. Interacts with DYNLL1. Interacts with CCDC62; the interaction requires estradiol and appears to enhance the transcription of target genes. Interacts with NR2C1; the interaction prevents homodimerization of ESR1 and suppresses its transcriptional activity and cell growth. Interacts with DNAAF4. Interacts with PRMT2. Interacts with PI3KR1 or PIK3R2, SRC and PTK2/FAK1. Interacts with RBFOX2. Interacts with EP300; the interaction is estrogen-dependent and enhanced by CITED1. Interacts with CITED1; the interaction is estrogen-dependent. Interacts with FAM120B, FOXL2, PHB2 and SLC30A9. Interacts with coactivators NCOA3 and NCOA6. Interacts with STK3/MST2 only in the presence of SAV1 and vice-versa. Binds to CSNK1D. Interacts with NCOA2; NCOA2 can interact with ESR1 AF-1 and AF-2 domains simultaneously and mediate their transcriptional synergy. Interacts with DDX5. Interacts with NCOA1; the interaction seems to require a self-association of N-terminal and C-terminal regions. Interacts with ZNF366, DDX17, NFKB1, RELA, SP1 and SP3. Interacts with NRIP1. Interacts with GPER1; the interaction occurs in an estrogen-dependent manner. Interacts with CLOCK and the interaction is stimulated by estrogen. Interacts with TRIP4 (ufmylated); estrogen dependent. Interacts with LMTK3; the interaction phosphorylates ESR1 (in vitro) and protects it against proteasomal degradation. Interacts with CCAR2 (via N-terminus) in a ligand-independent manner. Interacts with ZFHX3. Interacts with SFR1 in a ligand-dependent and -independent manner. Interacts with DCAF13, LATS1 and DCAF1; regulates ESR1 ubiquitination and ubiquitin-mediated proteasomal degradation. Interacts (via DNA-binding domain) with POU4F2 (C-terminus); this interaction increases the estrogen receptor ESR1 transcriptional activity in a DNA- and ligand 17-beta-estradiol-independent manner. Interacts with ESRRB isoform 1. Interacts with UBE3A and WBP2. Interacts with GTF2B. Interacts with RBM39. In the absence of hormonal ligand, interacts with TACC1. Interacts with BAG1; the interaction is promoted in the absence of estradiol (17-beta-estradiol/E2). Interacts with and ubiquitinated by STUB1; the interaction is promoted in the absence of estradiol (17-beta-estradiol/E2). Interacts with NEDD8. Post-translationally, ubiquitinated; regulated by LATS1 via DCAF1 it leads to ESR1 proteasomal degradation. Deubiquitinated by OTUB1. Ubiquitinated by STUB1/CHIP; in the CA1 hippocampal region following loss of endogenous circulating estradiol (17-beta-estradiol/E2). Ubiquitinated by UBR5, leading to its degradation: UBR5 specifically recognizes and binds ligand-bound ESR1 when it is not associated with coactivators (NCOAs). In presence of NCOAs, the UBR5-degron is not accessible, preventing its ubiquitination and degradation. Palmitoylated at Cys-45 by ZDHHC7 and ZDHHC21. Palmitoylation is required for plasma membrane targeting and for rapid intracellular signaling via ERK and AKT kinases and cAMP generation, but not for signaling mediated by the nuclear hormone receptor. In terms of processing, phosphorylated by cyclin A/CDK2 and CK1. Phosphorylation probably enhances transcriptional activity. Dephosphorylation by PPP5C inhibits its transactivation activity. Phosphorylated by LMTK3 (in vitro). Post-translationally, dimethylated by PRMT1. Demethylated by JMJD6.

Its subcellular location is the nucleus. The protein localises to the cytoplasm. It localises to the golgi apparatus. It is found in the cell membrane. Its function is as follows. Nuclear hormone receptor. The steroid hormones and their receptors are involved in the regulation of eukaryotic gene expression and affect cellular proliferation and differentiation in target tissues. Ligand-dependent nuclear transactivation involves either direct homodimer binding to a palindromic estrogen response element (ERE) sequence or association with other DNA-binding transcription factors, such as AP-1/c-Jun, c-Fos, ATF-2, Sp1 and Sp3, to mediate ERE-independent signaling. Ligand binding induces a conformational change allowing subsequent or combinatorial association with multiprotein coactivator complexes through LXXLL motifs of their respective components. Mutual transrepression occurs between the estrogen receptor (ER) and NF-kappa-B in a cell-type specific manner. Decreases NF-kappa-B DNA-binding activity and inhibits NF-kappa-B-mediated transcription from the IL6 promoter and displace RELA/p65 and associated coregulators from the promoter. Recruited to the NF-kappa-B response element of the CCL2 and IL8 promoters and can displace CREBBP. Present with NF-kappa-B components RELA/p65 and NFKB1/p50 on ERE sequences. Can also act synergistically with NF-kappa-B to activate transcription involving respective recruitment adjacent response elements; the function involves CREBBP. Can activate the transcriptional activity of TFF1. Also mediates membrane-initiated estrogen signaling involving various kinase cascades. Essential for MTA1-mediated transcriptional regulation of BRCA1 and BCAS3. Maintains neuronal survival in response to ischemic reperfusion injury when in the presence of circulating estradiol (17-beta-estradiol/E2). This is Estrogen receptor (ESR1) from Macaca mulatta (Rhesus macaque).